We begin with the raw amino-acid sequence, 252 residues long: Oncostatin-M (252 aa).

The first 25 residues, 1–25 (MGVLLTQRTLLSLVLALLFPSMASM), serve as a signal peptide directing secretion. Intrachain disulfides connect Cys31–Cys152 and Cys74–Cys192. Asn100 is a glycosylation site (N-linked (GlcNAc...) asparagine). Disordered stretches follow at residues 162-184 (TAEPTKAGRGASQPPTPTPASDA) and 213-252 (GESPNRSRRHSPHQALRKGVRRTRPSRKGKRLMTRGQLPR). Asn217 carries N-linked (GlcNAc...) asparagine glycosylation. Positions 218–245 (RSRRHSPHQALRKGVRRTRPSRKGKRLM) are enriched in basic residues. Positions 222–252 (HSPHQALRKGVRRTRPSRKGKRLMTRGQLPR) are excised as a propeptide.

This sequence belongs to the LIF/OSM family. Propeptide processing is not important for receptor binding activity but may be important growth-inhibitory activity.

It is found in the secreted. Functionally, growth regulator. Inhibits the proliferation of a number of tumor cell lines. Stimulates proliferation of AIDS-KS cells. It regulates cytokine production, including IL-6, G-CSF and GM-CSF from endothelial cells. Uses both type I OSM receptor (heterodimers composed of LIFR and IL6ST) and type II OSM receptor (heterodimers composed of OSMR and IL6ST). Involved in the maturation of fetal hepatocytes, thereby promoting liver development and regeneration. The sequence is that of Oncostatin-M (OSM) from Homo sapiens (Human).